The primary structure comprises 54 residues: uncharacterized protein (54 aa).

Positions 23-35 (DVMQEGETAKELN) are enriched in basic and acidic residues. Residues 23–54 (DVMQEGETAKELNYEGEDMQATSSAQNRQTSV) are disordered. Polar residues predominate over residues 42-54 (QATSSAQNRQTSV).

This is an uncharacterized protein from Bacillus subtilis (strain 168).